The primary structure comprises 366 residues: MATPQISRKALASLLLLVAAAAAVSTASADDVLALTESTFEKEVGQDRAALVEFYAPWCGHCKKLAPEYEKLGASFKKAKSVLIAKVDCDEHKSVCSKYGVSGYPTIQWFPKGSLEPKKYEGQRTAEALAEYVNSEAATNVKIAAVPSSVVVLTPETFDSVVLDETKDVLVEFYAPWCGHCKHLAPIYEKLASVYKQDEGVVIANLDADKHTALAEKYGVSGFPTLKFFPKGNKAGEDYDGGRELDDFVKFINEKCGTSRDSKGQLTSEAGIVESLAPLVKEFLGAANDKRKEALSKMEEDVAKLTGPAAKYGKIYVNSAKKIMEKGSEYTKKESERLQRMLEKSISPSKADEFVIKKNILSTFSS.

The signal sequence occupies residues 1 to 29; sequence MATPQISRKALASLLLLVAAAAAVSTASA. Thioredoxin domains follow at residues 30–138 and 139–257; these read DDVL…SEAA and TNVK…EKCG. Catalysis depends on nucleophile residues Cys-59, Cys-62, Cys-178, and Cys-181. Cystine bridges form between Cys-59-Cys-62 and Cys-178-Cys-181.

This sequence belongs to the protein disulfide isomerase family.

The protein resides in the secreted. The catalysed reaction is Catalyzes the rearrangement of -S-S- bonds in proteins.. Functionally, acts as a protein-folding catalyst that interacts with nascent polypeptides to catalyze the formation, isomerization, and reduction or oxidation of disulfide bonds. May play a role in storage protein biogenesis. This Oryza sativa subsp. japonica (Rice) protein is Protein disulfide isomerase-like 2-1 (PDIL2-1).